The primary structure comprises 241 residues: MKVLALSALLSLASAASISRRSDFCGQWDTATAGDFILYNDLWGEDNASSGSQCTGVDSASGSEIAWHTSWSWEGGSSDVKSYANAALQFTGTQLSSISSIPSTWKWTYSGSDIVADVAYDMFLGSTADASSDEYEIMVWLAALGGAGPISSTGSTIATPTINGVTWDLYTGPNGDTTVYSFVAQSTTEDFSGDLNDFFTYLVDNEGVSDSLYLTTLEAGTEPFTGSDAELKVSEYSVSIE.

The signal sequence occupies residues methionine 1 to alanine 16. Asparagine 47 carries an N-linked (GlcNAc...) asparagine glycan.

It belongs to the glycosyl hydrolase 12 (cellulase H) family.

The protein localises to the secreted. The enzyme catalyses xyloglucan + H2O = xyloglucan oligosaccharides.. Its function is as follows. Catalyzes endohydrolysis of 1,4-beta-D-glucosidic linkages in xyloglucan with retention of the beta-configuration of the glycosyl residues. Specific for xyloglucan and does not hydrolyze other cell wall components. The chain is Xyloglucan-specific endo-beta-1,4-glucanase A (xgeA) from Aspergillus niger.